A 322-amino-acid chain; its full sequence is Transaldolase (322 aa).

Catalysis depends on lysine 136, which acts as the Schiff-base intermediate with substrate.

It belongs to the transaldolase family. Type 1 subfamily. In terms of assembly, homodimer.

Its subcellular location is the cytoplasm. It catalyses the reaction D-sedoheptulose 7-phosphate + D-glyceraldehyde 3-phosphate = D-erythrose 4-phosphate + beta-D-fructose 6-phosphate. Its pathway is carbohydrate degradation; pentose phosphate pathway; D-glyceraldehyde 3-phosphate and beta-D-fructose 6-phosphate from D-ribose 5-phosphate and D-xylulose 5-phosphate (non-oxidative stage): step 2/3. In terms of biological role, transaldolase is important for the balance of metabolites in the pentose-phosphate pathway. The sequence is that of Transaldolase from Xanthomonas oryzae pv. oryzae (strain KACC10331 / KXO85).